The sequence spans 420 residues: Mannose-1-phosphate guanylyltransferase regulatory subunit alpha (420 aa).

The substrate-binding domain stretch occupies residues 2-251; it reads LKAVILIGGP…DGIWSQIKSA (250 aa). GDP-alpha-D-mannose contacts are provided by Glu85 and Gln247. Residues 273–420 are hexapeptide repeat domain; it reads LAKHTPGGPR…SRSFTNQIIL (148 aa). A C-loop region spans residues 356-384; the sequence is TPNDPNPNDPRARMDSESLFKDGKLLPAI.

The protein belongs to the transferase hexapeptide repeat family. Component of the GMPPA-GMPPB mannose-1-phosphate guanylyltransferase complex composed of 4 GMPPA subunits and 8 GMPPB subunits; the complex is organized into three layers, a central layer made up of 2 GMPPA dimers sandwiched between two layers each made up of 2 GMPPB dimers.

The protein resides in the cytoplasm. Functionally, regulatory subunit of the GMPPA-GMPPB mannose-1-phosphate guanylyltransferase complex; reduces the catalytic activity of GMPPB when part of the complex. Mediates allosteric feedback inhibition of GMPPB catalytic activity upon binding GDP-alpha-D-mannose. Together with GMPPB regulates GDP-alpha-D-mannose levels. This Papio anubis (Olive baboon) protein is Mannose-1-phosphate guanylyltransferase regulatory subunit alpha (GMPPA).